A 4116-amino-acid chain; its full sequence is Dynein axonemal heavy chain 3 (4116 aa).

2 disordered regions span residues 1–68 (MGAT…ANEE) and 137–172 (VPRDRTGQGLPSSGNRSSSEPMRKKTKFSSRNKEDS). Positions 1-1390 (MGATGRLELT…QVQIITTEAL (1390 aa)) are stem. Residues 145–156 (GLPSSGNRSSSE) are compositionally biased toward polar residues. Residues 785-852 (DLIKRCSEFE…NKEEELLEKE (68 aa)) are a coiled coil. 4 AAA regions span residues 1391–1612 (YGYE…VLTA), 1672–1903 (KVLN…LHCK), 2036–2284 (KVPA…VIQG), and 2395–2646 (EFNN…LRRH). ATP contacts are provided by residues 1429–1436 (GPAGTGKT), 1710–1717 (GDPMGGKT), 2074–2081 (GPTGTGKS), and 2434–2441 (GIGGSGRQ). Residues 2661-2960 (FKTLLNSKRQ…KDLEENIEIC (300 aa)) are stalk. AAA regions lie at residues 3045–3275 (LGDP…EISE) and 3488–3712 (VREF…QIQM).

It belongs to the dynein heavy chain family. Consists of at least two heavy chains and a number of intermediate and light chains. As to expression, expressed primarily in trachea and testis, 2 tissues containing axonemal structures. Also expressed in lung.

The protein resides in the cytoplasm. It localises to the cytoskeleton. The protein localises to the cilium axoneme. Functionally, force generating protein of respiratory cilia. Produces force towards the minus ends of microtubules. Dynein has ATPase activity; the force-producing power stroke is thought to occur on release of ADP. Involved in sperm motility; implicated in sperm flagellar assembly. This is Dynein axonemal heavy chain 3 (DNAH3) from Homo sapiens (Human).